The chain runs to 393 residues: Pyruvate dehydrogenase E1 component subunit alpha-2, mitochondrial (393 aa).

Residues 1 to 28 constitute a mitochondrion transit peptide; it reads MALSRLSSRSNTFLKPAITALPSSIRRH. 10 residues coordinate pyruvate: His-94, Tyr-120, Arg-121, Gly-169, Val-171, Asp-200, Gly-201, Ala-202, Asn-229, and Tyr-231. Thiamine diphosphate-binding residues include Tyr-120, Arg-121, Gly-169, Val-171, Asp-200, Gly-201, Ala-202, and Asn-229. Asp-200 lines the Mg(2+) pocket. Residues Asn-229 and Tyr-231 each contribute to the Mg(2+) site. His-295 lines the thiamine diphosphate pocket.

Tetramer of 2 alpha and 2 beta subunits. Thiamine diphosphate serves as cofactor. Requires Mg(2+) as cofactor.

It is found in the mitochondrion matrix. It carries out the reaction N(6)-[(R)-lipoyl]-L-lysyl-[protein] + pyruvate + H(+) = N(6)-[(R)-S(8)-acetyldihydrolipoyl]-L-lysyl-[protein] + CO2. Its activity is regulated as follows. E1 activity is regulated by phosphorylation (inactivation) and dephosphorylation (activation) of the alpha subunit. The pyruvate dehydrogenase complex catalyzes the overall conversion of pyruvate to acetyl-CoA and CO(2). It contains multiple copies of three enzymatic components: pyruvate dehydrogenase (E1), dihydrolipoamide acetyltransferase (E2) and lipoamide dehydrogenase (E3). In Arabidopsis thaliana (Mouse-ear cress), this protein is Pyruvate dehydrogenase E1 component subunit alpha-2, mitochondrial (IAR4).